A 330-amino-acid chain; its full sequence is Ketol-acid reductoisomerase (NADP(+)) (330 aa).

The region spanning 2 to 182 (VEIYYDDDAS…GGTRAGALRT (181 aa)) is the KARI N-terminal Rossmann domain. Residues 25-28 (YGSQ), Ser-51, and Ser-53 contribute to the NADP(+) site. Residue His-108 is part of the active site. NADP(+) is bound at residue Gly-134. The region spanning 183–328 (TFTEETETDL…AKLRPLMSWI (146 aa)) is the KARI C-terminal knotted domain. Residues Asp-191, Glu-195, Glu-227, and Glu-231 each contribute to the Mg(2+) site. Ser-252 serves as a coordination point for substrate.

The protein belongs to the ketol-acid reductoisomerase family. Mg(2+) is required as a cofactor.

It carries out the reaction (2R)-2,3-dihydroxy-3-methylbutanoate + NADP(+) = (2S)-2-acetolactate + NADPH + H(+). The catalysed reaction is (2R,3R)-2,3-dihydroxy-3-methylpentanoate + NADP(+) = (S)-2-ethyl-2-hydroxy-3-oxobutanoate + NADPH + H(+). Its pathway is amino-acid biosynthesis; L-isoleucine biosynthesis; L-isoleucine from 2-oxobutanoate: step 2/4. The protein operates within amino-acid biosynthesis; L-valine biosynthesis; L-valine from pyruvate: step 2/4. In terms of biological role, involved in the biosynthesis of branched-chain amino acids (BCAA). Catalyzes an alkyl-migration followed by a ketol-acid reduction of (S)-2-acetolactate (S2AL) to yield (R)-2,3-dihydroxy-isovalerate. In the isomerase reaction, S2AL is rearranged via a Mg-dependent methyl migration to produce 3-hydroxy-3-methyl-2-ketobutyrate (HMKB). In the reductase reaction, this 2-ketoacid undergoes a metal-dependent reduction by NADPH to yield (R)-2,3-dihydroxy-isovalerate. In Frankia alni (strain DSM 45986 / CECT 9034 / ACN14a), this protein is Ketol-acid reductoisomerase (NADP(+)).